The sequence spans 216 residues: U1 small nuclear ribonucleoprotein C (216 aa).

The segment at 4–36 (FFCDYCDVYLTHDSMSVRKAHNSGRNHLRNVVD) adopts a Matrin-type zinc-finger fold. Disordered stretches follow at residues 70 to 89 (PQNQ…PGAG) and 125 to 216 (PGGI…ADKR). Pro residues-rich tracts occupy residues 140-149 (PPMPPFPGMP) and 157-204 (GVPP…PPFG).

Belongs to the U1 small nuclear ribonucleoprotein C family. As to quaternary structure, U1 snRNP is composed of the 7 core Sm proteins B/B', D1, D2, D3, E, F and G that assemble in a heptameric protein ring on the Sm site of the small nuclear RNA to form the core snRNP, and at least 3 U1 snRNP-specific proteins U1-70K, U1-A and U1-C. U1-C interacts with U1 snRNA and the 5' splice-site region of the pre-mRNA.

The protein localises to the nucleus. In terms of biological role, component of the spliceosomal U1 snRNP, which is essential for recognition of the pre-mRNA 5' splice-site and the subsequent assembly of the spliceosome. U1-C is directly involved in initial 5' splice-site recognition for both constitutive and regulated alternative splicing. The interaction with the 5' splice-site seems to precede base-pairing between the pre-mRNA and the U1 snRNA. Stimulates commitment or early (E) complex formation by stabilizing the base pairing of the 5' end of the U1 snRNA and the 5' splice-site region. This chain is U1 small nuclear ribonucleoprotein C, found in Neurospora crassa (strain ATCC 24698 / 74-OR23-1A / CBS 708.71 / DSM 1257 / FGSC 987).